The chain runs to 623 residues: Glutathione import ATP-binding protein GsiA (623 aa).

ABC transporter domains are found at residues 15-269 (VENL…RALL) and 314-564 (LRVR…RKLL). ATP is bound by residues 49 to 56 (GESGSGKS) and 357 to 364 (GESGSGKS).

Belongs to the ABC transporter superfamily. Glutathione importer (TC 3.A.1.5.11) family. In terms of assembly, the complex is composed of two ATP-binding proteins (GsiA), two transmembrane proteins (GsiC and GsiD) and a solute-binding protein (GsiB).

It is found in the cell inner membrane. The catalysed reaction is glutathione(out) + ATP + H2O = glutathione(in) + ADP + phosphate + H(+). Functionally, part of the ABC transporter complex GsiABCD involved in glutathione import. Responsible for energy coupling to the transport system. The protein is Glutathione import ATP-binding protein GsiA of Shigella flexneri serotype 5b (strain 8401).